The following is a 35-amino-acid chain: Kappa-theraphotoxin-Tb1b (35 aa).

3 cysteine pairs are disulfide-bonded: Cys3–Cys18, Cys10–Cys23, and Cys17–Cys30.

It belongs to the neurotoxin 10 (Hwtx-1) family. 58 subfamily. In terms of assembly, monomer. Expressed by the venom gland.

The protein localises to the secreted. In terms of biological role, low-affinity blocker of Kv4.2/KCND2 voltage-gated potassium channels. Is presumed to shift the voltage-dependence of channel activation to more depolarized potentials and to bind to the S3-S4 linker region of the voltage sensor domain. This chain is Kappa-theraphotoxin-Tb1b, found in Theraphosa blondi (Goliath birdeating spider).